The sequence spans 362 residues: Phospho-N-acetylmuramoyl-pentapeptide-transferase (362 aa).

The next 10 helical transmembrane spans lie at Val-27–Trp-47, Thr-73–Leu-93, Tyr-97–Trp-117, Trp-132–Ala-152, Leu-160–Leu-180, Gly-200–Ala-220, Ala-237–Phe-257, Val-264–Val-284, Ile-289–Val-309, and Gln-339–Leu-359.

Belongs to the glycosyltransferase 4 family. MraY subfamily. Mg(2+) is required as a cofactor.

It localises to the cell inner membrane. The enzyme catalyses UDP-N-acetyl-alpha-D-muramoyl-L-alanyl-gamma-D-glutamyl-meso-2,6-diaminopimeloyl-D-alanyl-D-alanine + di-trans,octa-cis-undecaprenyl phosphate = di-trans,octa-cis-undecaprenyl diphospho-N-acetyl-alpha-D-muramoyl-L-alanyl-D-glutamyl-meso-2,6-diaminopimeloyl-D-alanyl-D-alanine + UMP. It functions in the pathway cell wall biogenesis; peptidoglycan biosynthesis. Functionally, catalyzes the initial step of the lipid cycle reactions in the biosynthesis of the cell wall peptidoglycan: transfers peptidoglycan precursor phospho-MurNAc-pentapeptide from UDP-MurNAc-pentapeptide onto the lipid carrier undecaprenyl phosphate, yielding undecaprenyl-pyrophosphoryl-MurNAc-pentapeptide, known as lipid I. The sequence is that of Phospho-N-acetylmuramoyl-pentapeptide-transferase from Aromatoleum aromaticum (strain DSM 19018 / LMG 30748 / EbN1) (Azoarcus sp. (strain EbN1)).